The following is a 356-amino-acid chain: Glutamine synthetase cytosolic isozyme (356 aa).

The GS beta-grasp domain maps to 19–99; the sequence is IIAEYIWIGG…VMCDAYTPAG (81 aa). Positions 38 to 66 are disordered; the sequence is RTLPGPVTDPSQLPKWNYDGSSTGQAPGE. In terms of domain architecture, GS catalytic spans 106–356; it reads KRHAAAKIFS…IADTTILWKP (251 aa).

Belongs to the glutamine synthetase family. Homooctamer.

It localises to the cytoplasm. The enzyme catalyses L-glutamate + NH4(+) + ATP = L-glutamine + ADP + phosphate + H(+). The protein is Glutamine synthetase cytosolic isozyme of Medicago sativa (Alfalfa).